A 507-amino-acid polypeptide reads, in one-letter code: Histidine ammonia-lyase (507 aa).

Residues 141–143 constitute a cross-link (5-imidazolinone (Ala-Gly)); sequence ASG. S142 carries the 2,3-didehydroalanine (Ser) modification.

It belongs to the PAL/histidase family. In terms of processing, contains an active site 4-methylidene-imidazol-5-one (MIO), which is formed autocatalytically by cyclization and dehydration of residues Ala-Ser-Gly.

Its subcellular location is the cytoplasm. It carries out the reaction L-histidine = trans-urocanate + NH4(+). It functions in the pathway amino-acid degradation; L-histidine degradation into L-glutamate; N-formimidoyl-L-glutamate from L-histidine: step 1/3. This Paraburkholderia phytofirmans (strain DSM 17436 / LMG 22146 / PsJN) (Burkholderia phytofirmans) protein is Histidine ammonia-lyase.